Reading from the N-terminus, the 628-residue chain is Monoterpene synthase like 1, chloroplastic (628 aa).

Positions 379, 383, and 531 each coordinate Mg(2+). The short motif at 379-383 (DDIYD) is the DDXXD motif element.

Belongs to the terpene synthase family. Tpsd subfamily. Requires Mg(2+) as cofactor. Mn(2+) is required as a cofactor.

It is found in the plastid. It localises to the chloroplast. It functions in the pathway terpene metabolism; oleoresin biosynthesis. It participates in secondary metabolite biosynthesis; terpenoid biosynthesis. Its function is as follows. Monoterpene synthase (TPS) involved in the biosynthesis of monoterpene natural products included in conifer oleoresin secretions and volatile emissions; these compounds contribute to biotic and abiotic stress defense against herbivores and pathogens. This is Monoterpene synthase like 1, chloroplastic from Pinus banksiana (Jack pine).